The chain runs to 161 residues: Nucleotide-binding protein xcc-b100_3818 (161 aa).

This sequence belongs to the YajQ family.

Functionally, nucleotide-binding protein. This Xanthomonas campestris pv. campestris (strain B100) protein is Nucleotide-binding protein xcc-b100_3818.